The sequence spans 256 residues: Undecaprenyl-diphosphatase (256 aa).

8 helical membrane passes run 5-25 (IIEI…PISS), 41-61 (NSLM…VFYF), 74-94 (LLSL…VISS), 100-120 (LLEN…IILY), 135-155 (LNFK…IPGV), 180-200 (FLLA…NAIG), 208-228 (LVLI…KFFL), and 234-254 (FSLN…FIII).

It belongs to the UppP family.

The protein resides in the cell inner membrane. The enzyme catalyses di-trans,octa-cis-undecaprenyl diphosphate + H2O = di-trans,octa-cis-undecaprenyl phosphate + phosphate + H(+). Its function is as follows. Catalyzes the dephosphorylation of undecaprenyl diphosphate (UPP). Confers resistance to bacitracin. This is Undecaprenyl-diphosphatase from Pelagibacter ubique (strain HTCC1062).